The chain runs to 530 residues: Glutamate--cysteine ligase (530 aa).

It belongs to the glutamate--cysteine ligase type 1 family. Type 1 subfamily.

It carries out the reaction L-cysteine + L-glutamate + ATP = gamma-L-glutamyl-L-cysteine + ADP + phosphate + H(+). Its pathway is sulfur metabolism; glutathione biosynthesis; glutathione from L-cysteine and L-glutamate: step 1/2. The polypeptide is Glutamate--cysteine ligase (Azotobacter vinelandii (strain DJ / ATCC BAA-1303)).